The sequence spans 361 residues: Chorismate synthase (361 aa).

2 residues coordinate NADP(+): Arg48 and Arg54. FMN contacts are provided by residues 125–127 (RSS), 238–239 (NA), Gly278, 293–297 (KPTSS), and Arg319.

The protein belongs to the chorismate synthase family. In terms of assembly, homotetramer. It depends on FMNH2 as a cofactor.

The enzyme catalyses 5-O-(1-carboxyvinyl)-3-phosphoshikimate = chorismate + phosphate. The protein operates within metabolic intermediate biosynthesis; chorismate biosynthesis; chorismate from D-erythrose 4-phosphate and phosphoenolpyruvate: step 7/7. In terms of biological role, catalyzes the anti-1,4-elimination of the C-3 phosphate and the C-6 proR hydrogen from 5-enolpyruvylshikimate-3-phosphate (EPSP) to yield chorismate, which is the branch point compound that serves as the starting substrate for the three terminal pathways of aromatic amino acid biosynthesis. This reaction introduces a second double bond into the aromatic ring system. The chain is Chorismate synthase from Salmonella arizonae (strain ATCC BAA-731 / CDC346-86 / RSK2980).